We begin with the raw amino-acid sequence, 323 residues long: NADH-ubiquinone oxidoreductase chain 1 (323 aa).

The next 8 membrane-spanning stretches (helical) occupy residues 8 to 28 (VINPLAYIVPVLLAVAFLTLL), 74 to 94 (FLFLATPMLALTLALTLWAPM), 105 to 125 (LGVLFVLALSSLAVYSILGSG), 145 to 165 (ISYEVSLGLILLSVIIITGGF), 176 to 196 (SIWLLVPAWPLAAMWYISTLA), 236 to 256 (ILLMNTLSAVLFLGASHIPAF), 258 to 278 (ELTALNLMTKAALLSVVFLWV), and 298 to 318 (FLPLTLALVLWHLALPIALAG).

The protein belongs to the complex I subunit 1 family.

It localises to the mitochondrion inner membrane. It carries out the reaction a ubiquinone + NADH + 5 H(+)(in) = a ubiquinol + NAD(+) + 4 H(+)(out). Its function is as follows. Core subunit of the mitochondrial membrane respiratory chain NADH dehydrogenase (Complex I) that is believed to belong to the minimal assembly required for catalysis. Complex I functions in the transfer of electrons from NADH to the respiratory chain. The immediate electron acceptor for the enzyme is believed to be ubiquinone. This is NADH-ubiquinone oxidoreductase chain 1 (MT-ND1) from Oncorhynchus mykiss (Rainbow trout).